The following is a 619-amino-acid chain: Chaperone protein HscA homolog (619 aa).

The protein belongs to the heat shock protein 70 family.

Functionally, chaperone involved in the maturation of iron-sulfur cluster-containing proteins. Has a low intrinsic ATPase activity which is markedly stimulated by HscB. The chain is Chaperone protein HscA homolog from Shewanella amazonensis (strain ATCC BAA-1098 / SB2B).